A 96-amino-acid chain; its full sequence is Putative pterin-4-alpha-carbinolamine dehydratase (96 aa).

The protein belongs to the pterin-4-alpha-carbinolamine dehydratase family.

It carries out the reaction (4aS,6R)-4a-hydroxy-L-erythro-5,6,7,8-tetrahydrobiopterin = (6R)-L-erythro-6,7-dihydrobiopterin + H2O. This chain is Putative pterin-4-alpha-carbinolamine dehydratase, found in Novosphingobium aromaticivorans (strain ATCC 700278 / DSM 12444 / CCUG 56034 / CIP 105152 / NBRC 16084 / F199).